The following is a 741-amino-acid chain: MNAPDKTGTRRRAIPAAVDLDALIRAEHRDPFSILGPHGDGGSGQYVRAYLPAALSVRLLARDDGRELGEMEMSEVPGFFVGHLEHPQPYLLKINWAGGEQITEDPYSFGPLLGEMDLYLFAEGNHRDLSSCLGAQVTSVDGVDGVRFAVWAPNARRVSVVGSFNSWDGRRHPMRMRHPTGVWEIFVPRLQPGEVYKYEILGAHGILPLKSDPMALSTTLPPDTASKIAAPLQFEWNDQEWLQSRAGRHEVTAPLSIYELHAGSWQMEQVEDNQWRQYNWRELADRLIPYVKELGFTHIELMPIMEHPFGGSWGYQLLAQFAPTARYGSPEDFAFFVDACHRAEIGVILDWVPAHFPTDTHGLAQFDGTCLYEYADPKEGFHQDWNTLIYNLGRTEVHGFMLASALHWLKHYHIDGLRVDAVASMLYRDYSRNAGEWVTNRFGGRENLEAIDFLRHLNDVVALEAPGTMVIAEESTAWPGVSEPTQQGGLGFNYKWNMGWMHDSLQYMEEDPINRGHHHGKLSFSLVYAWSERFVLPISHDEVVHGKHSLIDKMPGDRWQKFANLRAYLSFMWTHPGKKLLFMGCEFGQWREWNHDRELDWYLMQYAEHVGVKNLVGDLNRLYREEKALHERDADPAGFQWLVGDDSANSVFAYLRWSNDGEPLLVVANMTPVPRLDYRLGAPMRGAWTELLNSDAETYAGSNFGNGGEVMTEAEPAHGMEDSLVLNLPPLAVLILKPKKD.

D420 (nucleophile) is an active-site residue. E473 functions as the Proton donor in the catalytic mechanism.

It belongs to the glycosyl hydrolase 13 family. GlgB subfamily. In terms of assembly, monomer.

The catalysed reaction is Transfers a segment of a (1-&gt;4)-alpha-D-glucan chain to a primary hydroxy group in a similar glucan chain.. Its pathway is glycan biosynthesis; glycogen biosynthesis. Its function is as follows. Catalyzes the formation of the alpha-1,6-glucosidic linkages in glycogen by scission of a 1,4-alpha-linked oligosaccharide from growing alpha-1,4-glucan chains and the subsequent attachment of the oligosaccharide to the alpha-1,6 position. This is 1,4-alpha-glucan branching enzyme GlgB from Pseudomonas syringae pv. syringae (strain B728a).